Here is a 181-residue protein sequence, read N- to C-terminus: Alkyl hydroperoxide reductase AhpD (181 aa).

The active-site Proton donor is the C131. An intrachain disulfide couples C131 to C134. C134 (cysteine sulfenic acid (-SOH) intermediate) is an active-site residue.

It belongs to the AhpD family.

The catalysed reaction is N(6)-[(R)-dihydrolipoyl]-L-lysyl-[lipoyl-carrier protein] + a hydroperoxide = N(6)-[(R)-lipoyl]-L-lysyl-[lipoyl-carrier protein] + an alcohol + H2O. Functionally, antioxidant protein with alkyl hydroperoxidase activity. Required for the reduction of the AhpC active site cysteine residues and for the regeneration of the AhpC enzyme activity. This is Alkyl hydroperoxide reductase AhpD from Azorhizobium caulinodans (strain ATCC 43989 / DSM 5975 / JCM 20966 / LMG 6465 / NBRC 14845 / NCIMB 13405 / ORS 571).